We begin with the raw amino-acid sequence, 396 residues long: Septu protein PtuA (396 aa).

In terms of biological role, component of antiviral defense system Septu type I, composed of PtuA and PtuB. Expression of Septu type I in B.subtilis (strain BEST7003) confers resistance to phages SBSphiC and SBSphiJ. May be an ATPase. The protein is Septu protein PtuA of Bacillus thuringiensis.